Consider the following 131-residue polypeptide: MVERTAVFPAGRHSLYAEHRYSAAIRSGDLLFVSGQVGSREDGTPEPDFQQQVRLAFDNLHATLAAAGCTFDDIIDVTSFHTDPENQFEDIMTVKNEIFSAPPYPNWTAVGVTWLAGFDFEIKVIARIPEQ.

This sequence belongs to the RutC family.

The protein is RutC family protein YjgH (yjgH) of Escherichia coli (strain K12).